We begin with the raw amino-acid sequence, 145 residues long: Spore coat protein YeeK (145 aa).

PG repeat units lie at residues 9-15 (GGPGFGH), 22-28 (GHPGYGM), 32-38 (GYPGYGM), and 41-47 (GHPGYGM). GGY repeat units follow at residues 57 to 63 (GGVGGYP), 66 to 72 (GGYGGYP), and 74 to 80 (GGYGGSP). 4 H4 repeats span residues 99 to 105 (YHHHHDG), 111 to 117 (HHHHHVG), 121 to 127 (HHHHHDG), and 131 to 137 (HHHHHMG). The segment covering 100-138 (HHHHDGKDNLHHHHHHVGKDNHHHHHDGHYGHHHHHMGH) has biased composition (basic residues). Residues 100 to 145 (HHHHDGKDNLHHHHHHVGKDNHHHHHDGHYGHHHHHMGHWGKDGYK) form a disordered region.

The protein resides in the spore coat. In terms of biological role, part of the spore coat. In Bacillus subtilis (strain 168), this protein is Spore coat protein YeeK (yeeK).